A 296-amino-acid polypeptide reads, in one-letter code: NAD kinase (296 aa).

The Proton acceptor role is filled by D73. Residues 73–74, K78, 151–152, R178, D180, and 191–196 contribute to the NAD(+) site; these read DG, NE, and TAHAMS.

This sequence belongs to the NAD kinase family. It depends on a divalent metal cation as a cofactor.

It is found in the cytoplasm. It catalyses the reaction NAD(+) + ATP = ADP + NADP(+) + H(+). Involved in the regulation of the intracellular balance of NAD and NADP, and is a key enzyme in the biosynthesis of NADP. Catalyzes specifically the phosphorylation on 2'-hydroxyl of the adenosine moiety of NAD to yield NADP. The chain is NAD kinase from Francisella tularensis subsp. tularensis (strain FSC 198).